The primary structure comprises 501 residues: Chromosomal replication initiator protein DnaA (501 aa).

The interval Met1–Pro90 is domain I, interacts with DnaA modulators. Residues Asn91–Ser164 are domain II. A compositionally biased stretch (low complexity) spans Ala103–Lys121. The interval Ala103–Glu150 is disordered. Basic and acidic residues predominate over residues Asn122 to Phe134. The tract at residues Tyr165–Ser381 is domain III, AAA+ region. Positions 209, 211, 212, and 213 each coordinate ATP. Residues His382–Thr501 form a domain IV, binds dsDNA region.

It belongs to the DnaA family. In terms of assembly, oligomerizes as a right-handed, spiral filament on DNA at oriC.

It is found in the cytoplasm. In terms of biological role, plays an essential role in the initiation and regulation of chromosomal replication. ATP-DnaA binds to the origin of replication (oriC) to initiate formation of the DNA replication initiation complex once per cell cycle. Binds the DnaA box (a 9 base pair repeat at the origin) and separates the double-stranded (ds)DNA. Forms a right-handed helical filament on oriC DNA; dsDNA binds to the exterior of the filament while single-stranded (ss)DNA is stabiized in the filament's interior. The ATP-DnaA-oriC complex binds and stabilizes one strand of the AT-rich DNA unwinding element (DUE), permitting loading of DNA polymerase. After initiation quickly degrades to an ADP-DnaA complex that is not apt for DNA replication. Binds acidic phospholipids. This is Chromosomal replication initiator protein DnaA from Pseudomonas fluorescens (strain SBW25).